Here is a 916-residue protein sequence, read N- to C-terminus: Calcium homeostasis endoplasmic reticulum protein (916 aa).

Methionine 1 carries the N-acetylmethionine modification. Residues 15-57 (VIDKLAQFVARNGPEFEKMTMEKQKDNPKFSFLFGGEFYSYYK) form an SURP motif repeat. An N6-acetyllysine modification is found at lysine 18. Positions 149–289 (ETQLDMNEFD…QLQSPALGLG (141 aa)) constitute a CID domain. 2 disordered regions span residues 336 to 549 (QQQQ…RFPP) and 601 to 635 (HPPW…PHIN). Over residues 354-374 (TPPPPAPPPAPAPAPAIPPTT) the composition is skewed to pro residues. Over residues 480 to 501 (WNNQPDAAWNSQFEGPWNSQHE) the composition is skewed to polar residues. Residues 525–541 (PFPPHQQHPQFNQPPHP) show a composition bias toward pro residues. Phosphotyrosine is present on tyrosine 714. Residues 722-878 (RARRRKGQEK…DPIKGGDVRD (157 aa)) form a disordered region. Residues 739-749 (SRSRSKSRGRS) are compositionally biased toward basic residues. The segment covering 750–766 (SSRSNSRSSKSSGSYSR) has biased composition (low complexity). Residues 767-815 (SRSRSCSRSYSRSRSRSRSRSRSSRSRSRSQSRSRSKSYSPGRRRRSRS) show a composition bias toward basic residues. Phosphoserine is present on residues serine 813, serine 815, and serine 817. Residue threonine 819 is modified to Phosphothreonine. Serine 828 carries the phosphoserine modification. The G-patch domain maps to 841–891 (EENKGHQMLVKMGWSGSGGLGAKEQGIQDPIKGGDVRDKWDQYKGVGVALD). A Glycyl lysine isopeptide (Lys-Gly) (interchain with G-Cter in SUMO2) cross-link involves residue lysine 844. 2 positions are modified to phosphoserine: serine 855 and serine 857. Residue lysine 872 forms a Glycyl lysine isopeptide (Lys-Gly) (interchain with G-Cter in SUMO2) linkage. Lysine 879 is modified (N6-acetyllysine). Serine 904 is subject to Phosphoserine.

In terms of tissue distribution, expressed in brain, placenta, lung, liver, kidney, pancreas, cardiac and skeletal muscle, and in cultured HEL and Dami cells.

It localises to the cytoplasm. The protein resides in the perinuclear region. Its subcellular location is the endoplasmic reticulum. Its function is as follows. Involved in calcium homeostasis, growth and proliferation. The polypeptide is Calcium homeostasis endoplasmic reticulum protein (Homo sapiens (Human)).